Consider the following 160-residue polypeptide: Phosphopantetheine adenylyltransferase (160 aa).

Thr-10 provides a ligand contact to substrate. ATP-binding positions include 10-11 (TF) and His-18. Substrate contacts are provided by Lys-42, Leu-74, and Arg-88. ATP contacts are provided by residues 89–91 (GLR), Glu-99, and 124–130 (NSFISST).

This sequence belongs to the bacterial CoaD family. As to quaternary structure, homohexamer. Requires Mg(2+) as cofactor.

It is found in the cytoplasm. It catalyses the reaction (R)-4'-phosphopantetheine + ATP + H(+) = 3'-dephospho-CoA + diphosphate. The protein operates within cofactor biosynthesis; coenzyme A biosynthesis; CoA from (R)-pantothenate: step 4/5. Its function is as follows. Reversibly transfers an adenylyl group from ATP to 4'-phosphopantetheine, yielding dephospho-CoA (dPCoA) and pyrophosphate. The chain is Phosphopantetheine adenylyltransferase from Shewanella piezotolerans (strain WP3 / JCM 13877).